The sequence spans 124 residues: Small ribosomal subunit protein uS12cy (124 aa).

It belongs to the universal ribosomal protein uS12 family. Part of the 30S ribosomal subunit.

It is found in the plastid. The protein localises to the chloroplast. In terms of biological role, with S4 and S5 plays an important role in translational accuracy. Located at the interface of the 30S and 50S subunits. This is Small ribosomal subunit protein uS12cy (rps12-B) from Olimarabidopsis pumila (Dwarf rocket).